The primary structure comprises 338 residues: Ketol-acid reductoisomerase (NADP(+)) (338 aa).

The 181-residue stretch at 1 to 181 (MQVYYDKDCD…GGGRTGIIET (181 aa)) folds into the KARI N-terminal Rossmann domain. NADP(+)-binding positions include 24 to 27 (FGSQ), Arg47, Ser50, Ser52, and 82 to 85 (DEFQ). His107 is an active-site residue. Gly133 lines the NADP(+) pocket. The KARI C-terminal knotted domain maps to 182 to 327 (TFKDETETDL…EKLRSMMPWI (146 aa)). Asp190, Glu194, Glu226, and Glu230 together coordinate Mg(2+). Residue Ser251 participates in substrate binding.

This sequence belongs to the ketol-acid reductoisomerase family. It depends on Mg(2+) as a cofactor.

It carries out the reaction (2R)-2,3-dihydroxy-3-methylbutanoate + NADP(+) = (2S)-2-acetolactate + NADPH + H(+). The catalysed reaction is (2R,3R)-2,3-dihydroxy-3-methylpentanoate + NADP(+) = (S)-2-ethyl-2-hydroxy-3-oxobutanoate + NADPH + H(+). The protein operates within amino-acid biosynthesis; L-isoleucine biosynthesis; L-isoleucine from 2-oxobutanoate: step 2/4. Its pathway is amino-acid biosynthesis; L-valine biosynthesis; L-valine from pyruvate: step 2/4. Involved in the biosynthesis of branched-chain amino acids (BCAA). Catalyzes an alkyl-migration followed by a ketol-acid reduction of (S)-2-acetolactate (S2AL) to yield (R)-2,3-dihydroxy-isovalerate. In the isomerase reaction, S2AL is rearranged via a Mg-dependent methyl migration to produce 3-hydroxy-3-methyl-2-ketobutyrate (HMKB). In the reductase reaction, this 2-ketoacid undergoes a metal-dependent reduction by NADPH to yield (R)-2,3-dihydroxy-isovalerate. The sequence is that of Ketol-acid reductoisomerase (NADP(+)) from Marinobacter nauticus (strain ATCC 700491 / DSM 11845 / VT8) (Marinobacter aquaeolei).